Here is a 158-residue protein sequence, read N- to C-terminus: Cyclic pyranopterin monophosphate synthase (158 aa).

Residues 76–78 (LCH) and 114–115 (ME) each bind substrate. Residue Asp-129 is part of the active site.

The protein belongs to the MoaC family. Homohexamer; trimer of dimers.

The catalysed reaction is (8S)-3',8-cyclo-7,8-dihydroguanosine 5'-triphosphate = cyclic pyranopterin phosphate + diphosphate. The protein operates within cofactor biosynthesis; molybdopterin biosynthesis. Functionally, catalyzes the conversion of (8S)-3',8-cyclo-7,8-dihydroguanosine 5'-triphosphate to cyclic pyranopterin monophosphate (cPMP). This is Cyclic pyranopterin monophosphate synthase from Shewanella baltica (strain OS155 / ATCC BAA-1091).